A 212-amino-acid polypeptide reads, in one-letter code: Ribonuclease HII (212 aa).

Residues T2–Q206 form the RNase H type-2 domain. Residues D8, E9, and D101 each contribute to the a divalent metal cation site.

The protein belongs to the RNase HII family. Mn(2+) serves as cofactor. Mg(2+) is required as a cofactor.

It is found in the cytoplasm. It carries out the reaction Endonucleolytic cleavage to 5'-phosphomonoester.. Functionally, endonuclease that specifically degrades the RNA of RNA-DNA hybrids. The polypeptide is Ribonuclease HII (Natronomonas pharaonis (strain ATCC 35678 / DSM 2160 / CIP 103997 / JCM 8858 / NBRC 14720 / NCIMB 2260 / Gabara) (Halobacterium pharaonis)).